The chain runs to 780 residues: Cyclin-F (780 aa).

Positions 20-28 match the Nuclear localization signal 1 motif; sequence KRRIKRRPR. The F-box domain maps to 29 to 76; the sequence is NLTILSLPEDVLFHILKWLSVGDILAVRAVHSHLKYLVDNHASVWASA. One can recognise a Cyclin N-terminal domain in the interval 288–405; it reads QASQAVNKQQ…EIISALEGKI (118 aa). Short sequence motifs (d box) lie at residues 310–313, 343–346, and 349–352; these read RYIL, RRRL, and RYKL. Disordered regions lie at residues 544–594, 651–733, and 745–780; these read QESP…AELS, QESS…STKP, and CRPPNPPESGAHQQPVKRQNLSVHSDEDTNLGFLKL. The Nuclear localization signal 2 motif lies at 568–574; the sequence is RRSKRKR. Residues 582–761 are PEST; the sequence is RGSFVTTPTA…ESGAHQQPVK (180 aa). Positions 585 to 594 are enriched in polar residues; the sequence is FVTTPTAELS. 2 stretches are compositionally biased toward low complexity: residues 695-708 and 719-731; these read SGYSSVSSSSPISS and STSVLSVGSHSST. The D box 4 signature appears at 762-765; it reads RQNL.

This sequence belongs to the cyclin family. Cyclin AB subfamily. Component of the SCF(CCNF) complex consisting of CUL1, RBX1, SKP1 and CCNF. Interacts with SKP1. Interacts with CUL1. Interacts with CCNB1; interaction is required for nuclear localization of CCNB1. Interacts with CCP110; this interaction leads to CCP110 ubiquitination and degradation via the proteasome pathway. Interacts (via the Cyclin N-terminal domain) with MYBL2/BMYB. Interacts with FZR1/CDH1 (via N-terminus). Interacts with RRM2 (via Cy motif and when phosphorylated at 'Thr-33'); the interaction occurs exclusively in G2 and early M. Interacts with CDC6 (via Cy motif); the interaction takes place during G2 and M phase. Degraded when the spindle assembly checkpoint is activated during the G2-M transition. Degradation is not dependent on the proteasome or ubiquitin and depends on the C-terminal PEST sequence. In terms of processing, phosphorylated just before cells enter into mitosis. Post-translationally, ubiquitinated by the anaphase-promoting complex (APC/C); leading to its degradation by the proteasome.

It localises to the nucleus. Its subcellular location is the cytoplasm. The protein localises to the perinuclear region. The protein resides in the cytoskeleton. It is found in the microtubule organizing center. It localises to the centrosome. Its subcellular location is the centriole. Its function is as follows. Substrate recognition component of a SCF (SKP1-CUL1-F-box protein) E3 ubiquitin-protein ligase complex which mediates the ubiquitination and subsequent proteasomal degradation of target proteins. The SCF(CCNF) E3 ubiquitin-protein ligase complex is an integral component of the ubiquitin proteasome system (UPS) and links proteasome degradation to the cell cycle. Mediates the substrate recognition and the proteasomal degradation of various target proteins involved in the regulation of cell cycle progression and in the maintenance of genome stability. Mediates the ubiquitination and subsequent proteasomal degradation of CP110 during G2 phase, thereby acting as an inhibitor of centrosome reduplication. In G2, mediates the ubiquitination and proteasomal degradation of CDC6, thereby suppressing DNA re-replication and preventing genome instability. Involved in the ubiquitination and degradation of the substrate adapter CDH1 of the anaphase-promoting complex (APC/C), thereby acting as an antagonist of APC/C in regulating G1 progression and S phase entry. May play a role in the G2 cell cycle checkpoint control after DNA damage, possibly by promoting the ubiquitination of MYBL2/BMYB. The sequence is that of Cyclin-F (Ccnf) from Rattus norvegicus (Rat).